The following is a 411-amino-acid chain: Carbohydrate sulfotransferase 1 (411 aa).

The Cytoplasmic segment spans residues 1–2 (MQ). Residues 3–23 (CSWKAVLLLALASIAIQYTAI) form a helical; Signal-anchor for type II membrane protein membrane-spanning segment. Residues 24–411 (RTFTAKSFHT…VEERDFRPFL (388 aa)) are Lumenal-facing. N-linked (GlcNAc...) asparagine glycosylation occurs at Asn-56. Position 69–75 (69–75 (TRSGSSF)) interacts with 3'-phosphoadenylyl sulfate. Residues Asn-145 and Asn-189 are each glycosylated (N-linked (GlcNAc...) asparagine). 234–242 (RDPRGILAS) contributes to the 3'-phosphoadenylyl sulfate binding site. N-linked (GlcNAc...) asparagine glycosylation occurs at Asn-334. A Cell attachment site motif is present at residues 337 to 339 (RGD).

This sequence belongs to the sulfotransferase 1 family. Gal/GlcNAc/GalNAc subfamily. Broadly expressed with highest levels in central nervous system. Expressed in cortex (at protein level). Expressed in high endothelial venules in peripheral lymph nodes, mesenteric lymph nodes and Peyer's patches.

The protein resides in the golgi apparatus membrane. It catalyses the reaction 3'-phosphoadenylyl sulfate + keratan = adenosine 3',5'-bisphosphate + keratan 6'-sulfate.. The protein operates within glycan metabolism. In terms of biological role, sulfotransferase that utilizes 3'-phospho-5'-adenylyl sulfate (PAPS) as sulfonate donor to catalyze the transfer of sulfate to position 6 of internal galactose (Gal) residues of keratan. Cooperates with B4GALT4 and B3GNT7 glycosyltransferases and CHST6 sulfotransferase to construct and elongate disulfated disaccharide unit [-&gt;3(6-sulfoGalbeta)1-&gt;4(6-sulfoGlcNAcbeta)1-&gt;] within keratan sulfate polymer. Has a preference for sulfating keratan sulfate, but it also transfers sulfate to the unsulfated polymer. Involved in biosynthesis of phosphacan, a major keratan sulfate proteoglycan in the developing brain. Involved in biosynthesis of 6-sulfoGalbeta-containing O-linked glycans in high endothelial venules of lymph nodes. May act in a synergistic manner with CHST4 to generate sialyl 6',6-disulfo Lewis X motif, a recognition determinant for immune cell receptors implicated in leukocyte trafficking. Catalyzes sulfation of N-acetyllactosamine (LacNAc) oligosaccharides with highest efficiency for sialylated LacNAc structures. The polypeptide is Carbohydrate sulfotransferase 1 (Chst1) (Mus musculus (Mouse)).